The chain runs to 98 residues: Cell cycle protein GpsB (98 aa).

Residues 34 to 71 (LDIVIKDYEAFQQELDELRQENARLKRQVEELQKRPTT) are a coiled coil.

The protein belongs to the GpsB family. In terms of assembly, forms polymers through the coiled coil domains. Interacts with PBP1, MreC and EzrA.

It is found in the cytoplasm. In terms of biological role, divisome component that associates with the complex late in its assembly, after the Z-ring is formed, and is dependent on DivIC and PBP2B for its recruitment to the divisome. Together with EzrA, is a key component of the system that regulates PBP1 localization during cell cycle progression. Its main role could be the removal of PBP1 from the cell pole after pole maturation is completed. Also contributes to the recruitment of PBP1 to the division complex. Not essential for septum formation. This chain is Cell cycle protein GpsB, found in Geobacillus thermodenitrificans (strain NG80-2).